The following is a 2371-amino-acid chain: NBAS subunit of NRZ tethering complex (2371 aa).

Positions 1–1035 are interaction with USE1; it reads MAAPESGPAL…KTEATTKLHD (1035 aa). WD repeat units follow at residues 130-169 and 316-355; these read DPKPQWRRVAWSYDCTLLAYAESTGTVRVFDLMGSELFVI and QEQDGIFKMSLSPDGMLLAAIHFSGKLSIWAIPSLKQQGE. Residues Ser-473 and Ser-475 each carry the phosphoserine modification. Residues 1036–2371 are interaction with ZW10 and RINT1; it reads MVDQLEQILS…TALRAAQHWV (1336 aa). Lys-1057 carries the post-translational modification N6-acetyllysine.

Component of the NRZ complex composed of NBAS, ZW10 and RINT1/TIP20L; NRZ associates with SNAREs STX18, USE1, BNIP1/SEC20L and SEC22B (the assembly has been described as syntaxin 18 complex); links NRZ to SNARE USE1. In terms of tissue distribution, broadly expressed, with highest levels in heart and skeletal muscle, and lowest levels in liver, small intestine and thymus. Well expressed in retinal ganglion cells, epidermal skin cells, and leukocytes. Up-regulated together with N-myc in some neuroblastoma cell lines.

It localises to the cytoplasm. The protein resides in the endoplasmic reticulum. Its subcellular location is the endoplasmic reticulum membrane. Functionally, involved in Golgi-to-endoplasmic reticulum (ER) retrograde transport; the function is proposed to depend on its association in the NRZ complex which is believed to play a role in SNARE assembly at the ER. Required for normal embryonic development. May play a role in the nonsense-mediated decay pathway of mRNAs containing premature stop codons. The sequence is that of NBAS subunit of NRZ tethering complex from Homo sapiens (Human).